Here is a 135-residue protein sequence, read N- to C-terminus: Holo-[acyl-carrier-protein] synthase (135 aa).

The Mg(2+) site is built by D8 and E58.

Belongs to the P-Pant transferase superfamily. AcpS family. Mg(2+) serves as cofactor.

The protein localises to the cytoplasm. The catalysed reaction is apo-[ACP] + CoA = holo-[ACP] + adenosine 3',5'-bisphosphate + H(+). In terms of biological role, transfers the 4'-phosphopantetheine moiety from coenzyme A to a Ser of acyl-carrier-protein. In Ligilactobacillus salivarius (strain UCC118) (Lactobacillus salivarius), this protein is Holo-[acyl-carrier-protein] synthase.